The sequence spans 148 residues: Large ribosomal subunit protein uL15A (148 aa).

Basic residues-rich tracts occupy residues 1-13 and 21-31; these read MPTH…KLRG and RIGKHRKHPGG. Positions 1–36 are disordered; the sequence is MPTHVSKTRKLRGHVSAGHGRIGKHRKHPGGRGKAG.

Belongs to the universal ribosomal protein uL15 family. As to quaternary structure, component of the large ribosomal subunit (LSU). Mature yeast ribosomes consist of a small (40S) and a large (60S) subunit. The 40S small subunit contains 1 molecule of ribosomal RNA (18S rRNA) and at least 33 different proteins. The large 60S subunit contains 3 rRNA molecules (25S, 5.8S and 5S rRNA) and at least 46 different proteins.

The protein localises to the cytoplasm. Component of the ribosome, a large ribonucleoprotein complex responsible for the synthesis of proteins in the cell. The small ribosomal subunit (SSU) binds messenger RNAs (mRNAs) and translates the encoded message by selecting cognate aminoacyl-transfer RNA (tRNA) molecules. The large subunit (LSU) contains the ribosomal catalytic site termed the peptidyl transferase center (PTC), which catalyzes the formation of peptide bonds, thereby polymerizing the amino acids delivered by tRNAs into a polypeptide chain. The nascent polypeptides leave the ribosome through a tunnel in the LSU and interact with protein factors that function in enzymatic processing, targeting, and the membrane insertion of nascent chains at the exit of the ribosomal tunnel. The polypeptide is Large ribosomal subunit protein uL15A (rpl2802) (Schizosaccharomyces pombe (strain 972 / ATCC 24843) (Fission yeast)).